The following is a 338-amino-acid chain: Glycerol-3-phosphate dehydrogenase [NAD(P)+] (338 aa).

NADPH is bound by residues serine 13, tryptophan 14, and lysine 108. Sn-glycerol 3-phosphate is bound by residues lysine 108, glycine 139, and serine 141. Alanine 143 contacts NADPH. Positions 194, 247, 257, 258, and 259 each coordinate sn-glycerol 3-phosphate. The active-site Proton acceptor is lysine 194. Arginine 258 provides a ligand contact to NADPH. Positions 282 and 284 each coordinate NADPH.

The protein belongs to the NAD-dependent glycerol-3-phosphate dehydrogenase family.

The protein localises to the cytoplasm. The enzyme catalyses sn-glycerol 3-phosphate + NAD(+) = dihydroxyacetone phosphate + NADH + H(+). It carries out the reaction sn-glycerol 3-phosphate + NADP(+) = dihydroxyacetone phosphate + NADPH + H(+). It participates in membrane lipid metabolism; glycerophospholipid metabolism. Catalyzes the reduction of the glycolytic intermediate dihydroxyacetone phosphate (DHAP) to sn-glycerol 3-phosphate (G3P), the key precursor for phospholipid synthesis. The chain is Glycerol-3-phosphate dehydrogenase [NAD(P)+] from Streptococcus gordonii (strain Challis / ATCC 35105 / BCRC 15272 / CH1 / DL1 / V288).